Consider the following 403-residue polypeptide: Acetyl-CoA acetyltransferase IA (403 aa).

The Acyl-thioester intermediate role is filled by Cys-91. Active-site proton acceptor residues include His-353 and Cys-383. Positions 401–403 (AKL) match the Microbody targeting signal motif.

It belongs to the thiolase-like superfamily. Thiolase family. Multimeric.

It is found in the peroxisome. The enzyme catalyses 2 acetyl-CoA = acetoacetyl-CoA + CoA. Its pathway is metabolic intermediate biosynthesis; (R)-mevalonate biosynthesis; (R)-mevalonate from acetyl-CoA: step 1/3. This is Acetyl-CoA acetyltransferase IA (PACTA) from Candida tropicalis (Yeast).